The chain runs to 150 residues: Probable deoxyuridine 5'-triphosphate nucleotidohydrolase (150 aa).

It belongs to the dCTP deaminase family. Archaeal dUTPase subfamily.

The catalysed reaction is dUTP + H2O = dUMP + diphosphate + H(+). The protein operates within pyrimidine metabolism; dUMP biosynthesis; dUMP from dCTP (dUTP route): step 2/2. In terms of biological role, this enzyme is involved in nucleotide metabolism: it produces dUMP, the immediate precursor of thymidine nucleotides and it decreases the intracellular concentration of dUTP so that uracil cannot be incorporated into DNA. The protein is Probable deoxyuridine 5'-triphosphate nucleotidohydrolase of Methanothermobacter thermautotrophicus (strain ATCC 29096 / DSM 1053 / JCM 10044 / NBRC 100330 / Delta H) (Methanobacterium thermoautotrophicum).